Consider the following 37-residue polypeptide: Cytochrome b6-f complex subunit 5 (37 aa).

The helical transmembrane segment at 5 to 25 threads the bilayer; it reads LLSGIVLGLIVVTLSGLFYAA.

Belongs to the PetG family. As to quaternary structure, the 4 large subunits of the cytochrome b6-f complex are cytochrome b6, subunit IV (17 kDa polypeptide, PetD), cytochrome f and the Rieske protein, while the 4 small subunits are PetG, PetL, PetM and PetN. The complex functions as a dimer.

It is found in the cellular thylakoid membrane. Its function is as follows. Component of the cytochrome b6-f complex, which mediates electron transfer between photosystem II (PSII) and photosystem I (PSI), cyclic electron flow around PSI, and state transitions. PetG is required for either the stability or assembly of the cytochrome b6-f complex. The chain is Cytochrome b6-f complex subunit 5 from Trichormus variabilis (strain ATCC 29413 / PCC 7937) (Anabaena variabilis).